The primary structure comprises 490 residues: ATP synthase subunit beta, chloroplastic (490 aa).

ATP is bound at residue 170–177 (GGAGVGKT).

It belongs to the ATPase alpha/beta chains family. In terms of assembly, F-type ATPases have 2 components, CF(1) - the catalytic core - and CF(0) - the membrane proton channel. CF(1) has five subunits: alpha(3), beta(3), gamma(1), delta(1), epsilon(1). CF(0) has four main subunits: a(1), b(1), b'(1) and c(9-12).

It is found in the plastid. The protein localises to the chloroplast thylakoid membrane. The enzyme catalyses ATP + H2O + 4 H(+)(in) = ADP + phosphate + 5 H(+)(out). In terms of biological role, produces ATP from ADP in the presence of a proton gradient across the membrane. The catalytic sites are hosted primarily by the beta subunits. In Calystegia sepium (Hedge bindweed), this protein is ATP synthase subunit beta, chloroplastic.